A 248-amino-acid polypeptide reads, in one-letter code: Adenosylcobinamide-GDP ribazoletransferase (248 aa).

Helical transmembrane passes span F32–V52, A60–A80, A103–L123, W134–T154, A170–M190, L195–A215, and L227–F247.

This sequence belongs to the CobS family. It depends on Mg(2+) as a cofactor.

It localises to the cell inner membrane. The enzyme catalyses alpha-ribazole + adenosylcob(III)inamide-GDP = adenosylcob(III)alamin + GMP + H(+). It carries out the reaction alpha-ribazole 5'-phosphate + adenosylcob(III)inamide-GDP = adenosylcob(III)alamin 5'-phosphate + GMP + H(+). It functions in the pathway cofactor biosynthesis; adenosylcobalamin biosynthesis; adenosylcobalamin from cob(II)yrinate a,c-diamide: step 7/7. Joins adenosylcobinamide-GDP and alpha-ribazole to generate adenosylcobalamin (Ado-cobalamin). Also synthesizes adenosylcobalamin 5'-phosphate from adenosylcobinamide-GDP and alpha-ribazole 5'-phosphate. The polypeptide is Adenosylcobinamide-GDP ribazoletransferase (Prosthecochloris aestuarii (strain DSM 271 / SK 413)).